The primary structure comprises 91 residues: Small ribosomal subunit protein uS19 (91 aa).

It belongs to the universal ribosomal protein uS19 family.

Protein S19 forms a complex with S13 that binds strongly to the 16S ribosomal RNA. This chain is Small ribosomal subunit protein uS19, found in Azotobacter vinelandii (strain DJ / ATCC BAA-1303).